The primary structure comprises 100 residues: Urease subunit gamma (100 aa).

Belongs to the urease gamma subunit family. As to quaternary structure, heterotrimer of UreA (gamma), UreB (beta) and UreC (alpha) subunits. Three heterotrimers associate to form the active enzyme.

The protein resides in the cytoplasm. It carries out the reaction urea + 2 H2O + H(+) = hydrogencarbonate + 2 NH4(+). It functions in the pathway nitrogen metabolism; urea degradation; CO(2) and NH(3) from urea (urease route): step 1/1. This Sinorhizobium fredii (strain NBRC 101917 / NGR234) protein is Urease subunit gamma.